The chain runs to 510 residues: Flagellin A (510 aa).

The protein belongs to the bacterial flagellin family. In terms of assembly, heteromer of FlaA and FlaB. FlaB is located proximal to the hook while the remainder of the filament is composed of the predominant FlaA.

It is found in the secreted. Its subcellular location is the bacterial flagellum. Flagellin is the subunit protein which polymerizes to form the filaments of bacterial flagella. Important for motility and virulence. This is Flagellin A (flaA) from Helicobacter pylori (strain ATCC 700392 / 26695) (Campylobacter pylori).